The primary structure comprises 409 residues: Elongation factor Tu, chloroplastic (409 aa).

Residues lysine 10–alanine 214 form the tr-type G domain. Residues glycine 19 to threonine 26 are G1. Glycine 19–threonine 26 is a binding site for GTP. Threonine 26 lines the Mg(2+) pocket. Residues glycine 60–asparagine 64 form a G2 region. Residues aspartate 81 to glycine 84 are G3. Residues aspartate 81–histidine 85 and asparagine 136–aspartate 139 contribute to the GTP site. The G4 stretch occupies residues asparagine 136 to aspartate 139. Residues serine 174–leucine 176 are G5.

The protein belongs to the TRAFAC class translation factor GTPase superfamily. Classic translation factor GTPase family. EF-Tu/EF-1A subfamily.

The protein localises to the plastid. It is found in the chloroplast. It carries out the reaction GTP + H2O = GDP + phosphate + H(+). Functionally, GTP hydrolase that promotes the GTP-dependent binding of aminoacyl-tRNA to the A-site of ribosomes during protein biosynthesis. The protein is Elongation factor Tu, chloroplastic (tufA) of Ostreococcus tauri.